A 269-amino-acid chain; its full sequence is MKITKYRTKKSLGQCFILDPAIAEKIVSYAGCLEQYNVIEVGPGLGIMTQSILNKEVRRLTAIEKDRRLSNIHSKLKEAHAEYDCIFEDILDVNIEQLLSQSPLKMISNLPYNISVILLLKLLPYIHRFEKLILMFQKEVADRIVAQPNTKSYSILSILVQLLCDVRKVEDFPPEIFSPSPKVYSSVIEITPLLSPRFSVDNSYFAQVLKKLFHCRRKTIRNSLKSCIKDADALFIGCNIDPNARAESLTIEQLCSLTNALKARNINII.

Positions 17, 42, 64, 89, and 109 each coordinate S-adenosyl-L-methionine.

This sequence belongs to the class I-like SAM-binding methyltransferase superfamily. rRNA adenine N(6)-methyltransferase family. RsmA subfamily.

The protein localises to the cytoplasm. It carries out the reaction adenosine(1518)/adenosine(1519) in 16S rRNA + 4 S-adenosyl-L-methionine = N(6)-dimethyladenosine(1518)/N(6)-dimethyladenosine(1519) in 16S rRNA + 4 S-adenosyl-L-homocysteine + 4 H(+). Specifically dimethylates two adjacent adenosines (A1518 and A1519) in the loop of a conserved hairpin near the 3'-end of 16S rRNA in the 30S particle. May play a critical role in biogenesis of 30S subunits. The protein is Ribosomal RNA small subunit methyltransferase A of Anaplasma phagocytophilum (strain HZ).